The sequence spans 195 residues: PE-PGRS family protein PE_PGRS61 (195 aa).

Belongs to the mycobacterial PE family. PGRS subfamily. As to quaternary structure, interacts with human TLR2.

The protein localises to the secreted. The protein resides in the cell wall. It is found in the cell surface. With respect to regulation, binding of Ca(2+) to PE_PGRS61 induces conformational changes and increases affinity for TLR2. In terms of biological role, mediates Ca(2+)-dependent up-regulation of the anti-inflammatory cytokine IL-10. The protein is PE-PGRS family protein PE_PGRS61 of Mycobacterium tuberculosis (strain ATCC 25618 / H37Rv).